Consider the following 220-residue polypeptide: MKTGIVTTLIALCLPVSVFATTLRLSTDVDLLVLDGKKVSSSLLRGADSIELDNGPHQLVFRVEKTIHLSNSEERLYISPPLVVSFNTQLINQVNFRLPRLENEREANHFDAAPRLELLDGDATPIPVKLDILAITSTAKTIDYEVEVERYNKSAKRASLPQFATMMADDSTLLSGVSELDAIPPQSQVLTEQRLKYWFKLADPQTRNTFLQWAEKQPSS.

Residues 1–20 form the signal peptide; the sequence is MKTGIVTTLIALCLPVSVFA.

This sequence belongs to the UPF0319 family.

This chain is UPF0319 protein YccT, found in Escherichia coli O139:H28 (strain E24377A / ETEC).